The following is a 109-amino-acid chain: DVQMTQSPSYLAASPGESVSISCKASNKSISNNLAWYZZKPGKANKLLISSGSTLQSGTPSRFSGSGSDTDFTLTIRSLEFQDFAVYYCZZYNEPYYTFGAGTMLELKR.

The segment at 1-23 (DVQMTQSPSYLAASPGESVSISC) is framework-1. Residues 24–35 (KASNKSISNNLA) form a complementarity-determining-1 region. Residues 36–50 (WYZZKPGKANKLLIS) form a framework-2 region. A complementarity-determining-2 region spans residues 51–57 (SGSTLQS). The interval 58–89 (GTPSRFSGSGSDTDFTLTIRSLEFQDFAVYYC) is framework-3. The segment at 90–98 (ZZYNEPYYT) is complementarity-determining-3. Residues 99–108 (FGAGTMLELK) are framework-4.

The protein is Ig kappa chain V region S211 of Rattus norvegicus (Rat).